A 546-amino-acid chain; its full sequence is Probable protein kinase UbiB (546 aa).

In terms of domain architecture, Protein kinase spans 124-502; sequence DFDITPLASA…RVKQGQSRYL (379 aa). ATP is bound by residues 130–138 and lysine 153; that span reads LASASIAQV. Residue aspartate 288 is the Proton acceptor of the active site. The next 2 helical transmembrane spans lie at 501–518 and 523–542; these read YLFGIGATLMLSSTLLFI and WGMSPGWLMAGGILVWLIGW.

Belongs to the ABC1 family. UbiB subfamily.

Its subcellular location is the cell inner membrane. The protein operates within cofactor biosynthesis; ubiquinone biosynthesis [regulation]. In terms of biological role, is probably a protein kinase regulator of UbiI activity which is involved in aerobic coenzyme Q (ubiquinone) biosynthesis. This is Probable protein kinase UbiB from Cronobacter sakazakii (strain ATCC BAA-894) (Enterobacter sakazakii).